A 264-amino-acid polypeptide reads, in one-letter code: Indolethylamine N-methyltransferase (264 aa).

Lysine 14 carries the post-translational modification N6-succinyllysine. S-adenosyl-L-methionine is bound by residues tyrosine 21, tyrosine 26, 64–65, tyrosine 70, aspartate 86, and asparagine 91; that span reads GS. Lysine 97 is modified (N6-succinyllysine). Residues 143 to 144 and phenylalanine 164 each bind S-adenosyl-L-methionine; that span reads DV.

The protein belongs to the class I-like SAM-binding methyltransferase superfamily. NNMT/PNMT/TEMT family. In terms of assembly, monomer. Detected in lung and liver (at protein level).

The protein resides in the cytoplasm. It carries out the reaction a tertiary amine + S-adenosyl-L-methionine = a methylated tertiary amine + S-adenosyl-L-homocysteine + H(+). The enzyme catalyses a secondary amine + S-adenosyl-L-methionine = a methylated secondary amine + S-adenosyl-L-homocysteine + H(+). The catalysed reaction is a primary amine + S-adenosyl-L-methionine = a methylated primary amine + S-adenosyl-L-homocysteine + H(+). It catalyses the reaction dimethyl sulfide + S-adenosyl-L-methionine = trimethylsulfonium + S-adenosyl-L-homocysteine. Its activity is regulated as follows. Inhibited by the S-adenosyl-L-methionine analog sinefungin and by the product S-adenosyl-L-homocysteine. In terms of biological role, catalyzes the N-methylation of tryptamine and structurally related compounds. Functions as a thioether S-methyltransferase and is active with a variety of thioethers and the corresponding selenium and tellurium compounds, including 3-methylthiopropionaldehyde, dimethyl selenide, dimethyl telluride, 2-methylthioethylamine, 2-methylthioethanol, methyl-n-propyl sulfide and diethyl sulfide. Plays an important role in the detoxification of selenium compounds. This chain is Indolethylamine N-methyltransferase (Inmt), found in Mus musculus (Mouse).